The following is a 410-amino-acid chain: Translation initiation factor 2 subunit gamma (410 aa).

The tr-type G domain maps to 9-202; sequence QAEVNIGMVG…AIEEFIPTPE (194 aa). The G1 stretch occupies residues 18-25; it reads GHVDHGKT. Mg(2+) contacts are provided by aspartate 21, threonine 25, glycine 46, and threonine 48. GTP is bound at residue 21–26; the sequence is DHGKTT. Residues 46 to 50 are G2; the sequence is GITIK. Residues cysteine 61, cysteine 64, cysteine 73, and cysteine 76 each contribute to the Zn(2+) site. Residues 90–93 are G3; it reads DAPG. Residues 145 to 148 and 180 to 182 contribute to the GTP site; these read NKIE and SAL. Residues 145 to 148 form a G4 region; the sequence is NKIE. The interval 180–182 is G5; that stretch reads SAL.

The protein belongs to the TRAFAC class translation factor GTPase superfamily. Classic translation factor GTPase family. EIF2G subfamily. Heterotrimer composed of an alpha, a beta and a gamma chain. Requires Mg(2+) as cofactor.

It carries out the reaction GTP + H2O = GDP + phosphate + H(+). Its function is as follows. eIF-2 functions in the early steps of protein synthesis by forming a ternary complex with GTP and initiator tRNA. The polypeptide is Translation initiation factor 2 subunit gamma (Thermococcus onnurineus (strain NA1)).